The following is an 87-amino-acid chain: Retinal rod rhodopsin-sensitive cGMP 3',5'-cyclic phosphodiesterase subunit gamma (87 aa).

Methionine 1 is modified (N-acetylmethionine). Positions 1-12 are enriched in basic and acidic residues; that stretch reads MNLEPPKGEIRS. Residues 1–55 are disordered; sequence MNLEPPKGEIRSATRVIGGPVTPRKGPPKFKQRQTRQFKSKPPKKGVQGFGDDIP. Residues 26 to 44 are compositionally biased toward basic residues; that stretch reads GPPKFKQRQTRQFKSKPPK.

This sequence belongs to the rod/cone cGMP-PDE gamma subunit family. As to quaternary structure, oligomer composed of two catalytic chains (alpha and beta), an inhibitory chain (gamma) and the delta chain.

It catalyses the reaction 3',5'-cyclic GMP + H2O = GMP + H(+). Functionally, participates in processes of transmission and amplification of the visual signal. cGMP-PDEs are the effector molecules in G-protein-mediated phototransduction in vertebrate rods and cones. This chain is Retinal rod rhodopsin-sensitive cGMP 3',5'-cyclic phosphodiesterase subunit gamma (Pde6g), found in Mus musculus (Mouse).